We begin with the raw amino-acid sequence, 1149 residues long: Potassium channel subfamily U member 1 (1149 aa).

Residues 1–24 (MFQTKLRNESWEDLQKMSCTTEIQ) are Extracellular-facing. The helical transmembrane segment at 25-45 (VAFILSSFMTFISGLIILLIF) threads the bilayer. Residues 46–101 (RLIWRTVKKWQIIKGTGIILELFTSGSIRRNHVRSLHFHGRFRDRIEMLLSAQTFV) are Cytoplasmic-facing. The helical transmembrane segment at 102-122 (GQVLVILVFVLSIGSLIIYFI) threads the bilayer. Residues 123–138 (NSADPVGSCSSYEDKT) lie on the Extracellular side of the membrane. Residues 139-159 (IPVDLVFNAFFSFYFGLRFMA) traverse the membrane as a helical segment. Over 160–163 (ADDK) the chain is Cytoplasmic. The chain crosses the membrane as a helical span at residues 164–184 (IKFWLEMNSIVDIFTIPPTFI). Residues 185–188 (SYYL) are Extracellular-facing. Residues 189–209 (KSNWLGLRFLRALRLLELPRI) traverse the membrane as a helical; Voltage-sensor segment. Residues 210-226 (LQILRAIKTSNSVKFSK) are Cytoplasmic-facing. The helical transmembrane segment at 227-247 (LLSIVLSTWFTAAGFIHLVEN) threads the bilayer. Residues 248–259 (SGDPWLKGRNSQ) are Extracellular-facing. An intramembrane region (pore-forming) is located at residues 260-282 (NISYFDSVYLVMATTSTVGFGDV). The Selectivity for potassium motif lies at 276-279 (TVGF). Residues 283 to 291 (VAKTSLGRT) are Extracellular-facing. A helical transmembrane segment spans residues 292–312 (FIIFFTLGSLILFANYIPEMV). The Cytoplasmic segment spans residues 313–1149 (ELFANKRKYT…EDPFAYSEPL (837 aa)). RCK N-terminal domains are found at residues 331–473 (KKFI…DNII) and 713–884 (RNHI…EGSL). Positions 829 to 845 (IDSSSDSSPSVSEETAS) are enriched in low complexity. Disordered stretches follow at residues 829 to 851 (IDSSSDSSPSVSEETASCTNGHN) and 1106 to 1149 (ARNQ…SEPL). Residues 1106-1120 (ARNQIRTNSSITSQK) are compositionally biased toward polar residues.

It belongs to the potassium channel family. Calcium-activated (TC 1.A.1.3) subfamily. KCa5.1/KCNU1 sub-subfamily. Homotetramer; which constitutes the calcium-activated potassium channel. Interacts with LRRC52; this interaction changes some channel gating properties, such as shifting gating to more negative potentials at a given pH. Testis-specific.

The protein localises to the cell membrane. Its subcellular location is the cell projection. It localises to the cilium. It is found in the flagellum membrane. The enzyme catalyses K(+)(in) = K(+)(out). With respect to regulation, regulated by changes in cytosolic pH; activated by alkalization. VU0546110 acts as a selective inhibitor. The auxiliary subunit LRRC52 shifts the activation of KCNU1 to more negative potentials at a given pH. Testis-specific potassium channel activated by both intracellular pH and membrane voltage that mediates export of K(+). Represents the primary spermatozoan K(+) current. The channel underlies a pH-triggered membrane hyperpolarization during the process of sperm capacitation, as sperm encounter the alkaline environment near the ovum in the female reproductive tract, thereby playing an essential for male fertility. The sequence is that of Potassium channel subfamily U member 1 (KCNU1) from Macaca fascicularis (Crab-eating macaque).